Reading from the N-terminus, the 185-residue chain is CD160 antigen (185 aa).

The signal sequence occupies residues 1–27 (MQRILMAPGQSCCALAILLAIVNFQHG). An Ig-like V-type domain is found at 28–136 (GCIHVTSSAS…HGHFLSVLVT (109 aa)). 2 disulfide bridges follow: C47-C115 and C64-C71. 2 N-linked (GlcNAc...) asparagine glycosylation sites follow: N138 and N156. The GPI-anchor amidated serine moiety is linked to residue S160. Positions 161–185 (SGFLQVKAWGMLVTSLVALQALYTL) are cleaved as a propeptide — removed in mature form.

As to quaternary structure, homomultimer; disulfide-linked. Interacts with classical and non-classical MHC class I molecules. Interacts with TNFRSF14 (via cysteine-rich domain 1); this interaction is direct. Interacts with LCK and CD247/CD3 zeta chain. As to expression, expressed in resting and activated NK cell subsets (at protein level). Expressed in resting NKT cells (at protein level). Expressed in activated CD8+ T cells (at protein level). Highly expressed in intraepithelial lymphocyte (IEL) subsets, particularly in innate-like CD8A-positive IELs (at protein level).

Its subcellular location is the cell membrane. The protein resides in the secreted. Functionally, receptor on immune cells capable to deliver stimulatory or inhibitory signals that regulate cell activation and differentiation. Exists as a GPI-anchored and as a transmembrane form, each likely initiating distinct signaling pathways via phosphoinositol 3-kinase in activated NK cells and via LCK and CD247/CD3 zeta chain in activated T cells. Receptor for both classical and non-classical MHC class I molecules. Receptor or ligand for TNF superfamily member TNFRSF14, participating in bidirectional cell-cell contact signaling between antigen presenting cells and lymphocytes. Upon ligation of TNFRSF14, provides stimulatory signal to NK cells enhancing IFNG production and anti-tumor immune response. On activated CD4+ T cells, interacts with TNFRSF14 and down-regulates CD28 costimulatory signaling, restricting memory and alloantigen-specific immune response. In the context of bacterial infection, acts as a ligand for TNFRSF14 on epithelial cells, triggering the production of antimicrobial proteins and pro-inflammatory cytokines. The soluble GPI-cleaved form, usually released by activated lymphocytes, might play an immune regulatory role by limiting lymphocyte effector functions. This chain is CD160 antigen, found in Mus musculus (Mouse).